We begin with the raw amino-acid sequence, 1132 residues long: Tyrosine-protein kinase JAK2 (1132 aa).

The interaction with cytokine/interferon/growth hormone receptors stretch occupies residues 1 to 239; that stretch reads MGMACLTMTE…RYRFRRFIQQ (239 aa). The 344-residue stretch at 37 to 380 folds into the FERM domain; sequence PVLQVYLYHS…GYYRLTADAH (344 aa). The residue at position 119 (Tyr-119) is a Phosphotyrosine; by autocatalysis. A phosphotyrosine mark is found at Tyr-372 and Tyr-373. The SH2; atypical domain maps to 401–482; sequence HGPISMDFAI…SLKDLLNCYQ (82 aa). Residue Ser-523 is modified to Phosphoserine. Residues 545 to 809 enclose the Protein kinase 1 domain; sequence LIFNESLGQG…AIIRDLNSLF (265 aa). Residues Tyr-570 and Tyr-813 each carry the phosphotyrosine modification. Residues 849 to 1124 form the Protein kinase 2 domain; it reads LKFLQQLGKG…SFRDLALRVD (276 aa). An ATP-binding site is contributed by 855–863; sequence LGKGNFGSV. Tyr-868 carries the post-translational modification Phosphotyrosine; by autocatalysis. Position 882 (Lys-882) interacts with ATP. 2 positions are modified to phosphotyrosine; by autocatalysis: Tyr-966 and Tyr-972. The Proton acceptor role is filled by Asp-976. Phosphotyrosine; by autocatalysis is present on residues Tyr-1007 and Tyr-1008.

It belongs to the protein kinase superfamily. Tyr protein kinase family. JAK subfamily. As to quaternary structure, interacts with EPOR, LYN, SIRPA, SH2B1 and TEC. Interacts with IL23R. Interacts with SKB1. Interacts with STAM2. Interacts with IFNGR2 (via intracellular domain). Interacts with LEPR (Isoform B). Interacts with HSP90AB1; promotes functional activation in a heat shock-dependent manner. Interacts with STRA6. Interacts with RHEX; this interaction occurs in a erythropoietin (EPO)-dependent manner. Interacts with ASB2; the interaction targets JAK2 for Notch-induced proteasomal degradation. Interacts with MPL/TPOR. Mg(2+) serves as cofactor. Autophosphorylated, leading to regulate its activity. Leptin promotes phosphorylation on tyrosine residues, including phosphorylation on Tyr-813. Autophosphorylation on Tyr-119 in response to EPO down-regulates its kinase activity. Autophosphorylation on Tyr-868, Tyr-966 and Tyr-972 in response to growth hormone (GH) are required for maximal kinase activity. Also phosphorylated by TEC. Phosphorylated on tyrosine residues in response to interferon gamma signaling. Phosphorylated on tyrosine residues in response to a signaling cascade that is activated by increased cellular retinol. Post-translationally, undergoes Notch-induced ubiquitination and subsequent proteasomal degradation which is mediated by ASB1 or ASB2, the substrate-recognition components of probable ECS E3 ubiquitin-protein ligase complexes. In terms of tissue distribution, ubiquitously expressed throughout most tissues.

The protein localises to the endomembrane system. It is found in the cytoplasm. Its subcellular location is the nucleus. The catalysed reaction is L-tyrosyl-[protein] + ATP = O-phospho-L-tyrosyl-[protein] + ADP + H(+). Regulated by autophosphorylation, can both activate or decrease activity. Heme regulates its activity by enhancing the phosphorylation on Tyr-1007 and Tyr-1008. Non-receptor tyrosine kinase involved in various processes such as cell growth, development, differentiation or histone modifications. Mediates essential signaling events in both innate and adaptive immunity. In the cytoplasm, plays a pivotal role in signal transduction via its association with type I receptors such as growth hormone (GHR), prolactin (PRLR), leptin (LEPR), erythropoietin (EPOR), thrombopoietin receptor (MPL/TPOR); or type II receptors including IFN-alpha, IFN-beta, IFN-gamma and multiple interleukins. Following ligand-binding to cell surface receptors, phosphorylates specific tyrosine residues on the cytoplasmic tails of the receptor, creating docking sites for STATs proteins. Subsequently, phosphorylates the STATs proteins once they are recruited to the receptor. Phosphorylated STATs then form homodimer or heterodimers and translocate to the nucleus to activate gene transcription. For example, cell stimulation with erythropoietin (EPO) during erythropoiesis leads to JAK2 autophosphorylation, activation, and its association with erythropoietin receptor (EPOR) that becomes phosphorylated in its cytoplasmic domain. Then, STAT5 (STAT5A or STAT5B) is recruited, phosphorylated and activated by JAK2. Once activated, dimerized STAT5 translocates into the nucleus and promotes the transcription of several essential genes involved in the modulation of erythropoiesis. Part of a signaling cascade that is activated by increased cellular retinol and that leads to the activation of STAT5 (STAT5A or STAT5B). In addition, JAK2 mediates angiotensin-2-induced ARHGEF1 phosphorylation. Plays a role in cell cycle by phosphorylating CDKN1B. Cooperates with TEC through reciprocal phosphorylation to mediate cytokine-driven activation of FOS transcription. In the nucleus, plays a key role in chromatin by specifically mediating phosphorylation of 'Tyr-41' of histone H3 (H3Y41ph), a specific tag that promotes exclusion of CBX5 (HP1 alpha) from chromatin. Up-regulates the potassium voltage-gated channel activity of KCNA3. This chain is Tyrosine-protein kinase JAK2, found in Homo sapiens (Human).